The sequence spans 120 residues: Large ribosomal subunit protein bL17 (120 aa).

The protein belongs to the bacterial ribosomal protein bL17 family. Part of the 50S ribosomal subunit. Contacts protein L32.

In Anoxybacillus flavithermus (strain DSM 21510 / WK1), this protein is Large ribosomal subunit protein bL17.